The chain runs to 583 residues: Arginine--tRNA ligase (583 aa).

The short motif at alanine 131–histidine 141 is the 'HIGH' region element.

Belongs to the class-I aminoacyl-tRNA synthetase family. Monomer.

It localises to the cytoplasm. The enzyme catalyses tRNA(Arg) + L-arginine + ATP = L-arginyl-tRNA(Arg) + AMP + diphosphate. The sequence is that of Arginine--tRNA ligase from Parvibaculum lavamentivorans (strain DS-1 / DSM 13023 / NCIMB 13966).